We begin with the raw amino-acid sequence, 277 residues long: Shikimate dehydrogenase (NADP(+)) (277 aa).

Residues 15-17 and T64 contribute to the shikimate site; that span reads SKS. The active-site Proton acceptor is the K68. Shikimate is bound by residues N89 and D104. NADP(+) is bound by residues 129 to 133, 153 to 158, and M217; these read GAGGA and NRTAKR. Shikimate is bound at residue Y219. G242 is a binding site for NADP(+).

It belongs to the shikimate dehydrogenase family. In terms of assembly, homodimer.

It catalyses the reaction shikimate + NADP(+) = 3-dehydroshikimate + NADPH + H(+). It functions in the pathway metabolic intermediate biosynthesis; chorismate biosynthesis; chorismate from D-erythrose 4-phosphate and phosphoenolpyruvate: step 4/7. Its function is as follows. Involved in the biosynthesis of the chorismate, which leads to the biosynthesis of aromatic amino acids. Catalyzes the reversible NADPH linked reduction of 3-dehydroshikimate (DHSA) to yield shikimate (SA). This Hydrogenovibrio crunogenus (strain DSM 25203 / XCL-2) (Thiomicrospira crunogena) protein is Shikimate dehydrogenase (NADP(+)).